The chain runs to 512 residues: ATP synthase subunit alpha (512 aa).

169-176 (GDRQTGKT) lines the ATP pocket.

It belongs to the ATPase alpha/beta chains family. F-type ATPases have 2 components, CF(1) - the catalytic core - and CF(0) - the membrane proton channel. CF(1) has five subunits: alpha(3), beta(3), gamma(1), delta(1), epsilon(1). CF(0) has three main subunits: a(1), b(2) and c(9-12). The alpha and beta chains form an alternating ring which encloses part of the gamma chain. CF(1) is attached to CF(0) by a central stalk formed by the gamma and epsilon chains, while a peripheral stalk is formed by the delta and b chains.

It localises to the cell inner membrane. It catalyses the reaction ATP + H2O + 4 H(+)(in) = ADP + phosphate + 5 H(+)(out). Its function is as follows. Produces ATP from ADP in the presence of a proton gradient across the membrane. The alpha chain is a regulatory subunit. The polypeptide is ATP synthase subunit alpha (Rickettsia canadensis (strain McKiel)).